A 189-amino-acid polypeptide reads, in one-letter code: UPF0301 protein RAF_ORF0041 (189 aa).

Belongs to the UPF0301 (AlgH) family.

The chain is UPF0301 protein RAF_ORF0041 from Rickettsia africae (strain ESF-5).